Consider the following 118-residue polypeptide: Small ribosomal subunit protein uS13 (118 aa).

The interval 93–118 (RGLPVRGQRTKTNARTRKGPRKPIRK) is disordered.

This sequence belongs to the universal ribosomal protein uS13 family. Part of the 30S ribosomal subunit. Forms a loose heterodimer with protein S19. Forms two bridges to the 50S subunit in the 70S ribosome.

In terms of biological role, located at the top of the head of the 30S subunit, it contacts several helices of the 16S rRNA. In the 70S ribosome it contacts the 23S rRNA (bridge B1a) and protein L5 of the 50S subunit (bridge B1b), connecting the 2 subunits; these bridges are implicated in subunit movement. Contacts the tRNAs in the A and P-sites. The sequence is that of Small ribosomal subunit protein uS13 from Pseudomonas paraeruginosa (strain DSM 24068 / PA7) (Pseudomonas aeruginosa (strain PA7)).